The sequence spans 427 residues: tRNA(Ile)-lysidine synthase (427 aa).

21–26 contributes to the ATP binding site; the sequence is SGGADS.

This sequence belongs to the tRNA(Ile)-lysidine synthase family.

It localises to the cytoplasm. The enzyme catalyses cytidine(34) in tRNA(Ile2) + L-lysine + ATP = lysidine(34) in tRNA(Ile2) + AMP + diphosphate + H(+). Functionally, ligates lysine onto the cytidine present at position 34 of the AUA codon-specific tRNA(Ile) that contains the anticodon CAU, in an ATP-dependent manner. Cytidine is converted to lysidine, thus changing the amino acid specificity of the tRNA from methionine to isoleucine. This is tRNA(Ile)-lysidine synthase from Actinobacillus succinogenes (strain ATCC 55618 / DSM 22257 / CCUG 43843 / 130Z).